The primary structure comprises 120 residues: Large ribosomal subunit protein bL17 (120 aa).

It belongs to the bacterial ribosomal protein bL17 family. In terms of assembly, part of the 50S ribosomal subunit. Contacts protein L32.

This is Large ribosomal subunit protein bL17 from Geobacillus kaustophilus (strain HTA426).